The sequence spans 506 residues: ATP synthase subunit alpha, chloroplastic (506 aa).

170–177 (GDRQTGKT) serves as a coordination point for ATP.

Belongs to the ATPase alpha/beta chains family. As to quaternary structure, F-type ATPases have 2 components, CF(1) - the catalytic core - and CF(0) - the membrane proton channel. CF(1) has five subunits: alpha(3), beta(3), gamma(1), delta(1), epsilon(1). CF(0) has four main subunits: a, b, b' and c.

Its subcellular location is the plastid. The protein resides in the chloroplast thylakoid membrane. The enzyme catalyses ATP + H2O + 4 H(+)(in) = ADP + phosphate + 5 H(+)(out). Functionally, produces ATP from ADP in the presence of a proton gradient across the membrane. The alpha chain is a regulatory subunit. The sequence is that of ATP synthase subunit alpha, chloroplastic from Chlorella vulgaris (Green alga).